The chain runs to 312 residues: Ribosomal RNA small subunit methyltransferase H (312 aa).

Residues 30 to 32 (GGH), Asp50, Phe80, Asp98, and Gln105 contribute to the S-adenosyl-L-methionine site.

The protein belongs to the methyltransferase superfamily. RsmH family.

Its subcellular location is the cytoplasm. The catalysed reaction is cytidine(1402) in 16S rRNA + S-adenosyl-L-methionine = N(4)-methylcytidine(1402) in 16S rRNA + S-adenosyl-L-homocysteine + H(+). Its function is as follows. Specifically methylates the N4 position of cytidine in position 1402 (C1402) of 16S rRNA. This Lawsonia intracellularis (strain PHE/MN1-00) protein is Ribosomal RNA small subunit methyltransferase H.